We begin with the raw amino-acid sequence, 260 residues long: Global transcriptional regulator CodY (260 aa).

The tract at residues 1-159 is GAF domain; the sequence is MPNLLEKTRK…SSTVVGIQLL (159 aa). Residues 207–226 constitute a DNA-binding region (H-T-H motif); the sequence is ASVIADRIGITRSVIVNALR.

It belongs to the CodY family.

The protein localises to the cytoplasm. Functionally, DNA-binding global transcriptional regulator which is involved in the adaptive response to starvation and acts by directly or indirectly controlling the expression of numerous genes in response to nutrient availability. During rapid exponential growth, CodY is highly active and represses genes whose products allow adaptation to nutrient depletion. The chain is Global transcriptional regulator CodY from Streptococcus uberis (strain ATCC BAA-854 / 0140J).